The chain runs to 229 residues: Small ribosomal subunit protein uS3 (229 aa).

In terms of domain architecture, KH type-2 spans 39-107; it reads IRKFLKKELY…EVFINIKEEK (69 aa).

The protein belongs to the universal ribosomal protein uS3 family. As to quaternary structure, part of the 30S ribosomal subunit. Forms a tight complex with proteins S10 and S14.

Its function is as follows. Binds the lower part of the 30S subunit head. Binds mRNA in the 70S ribosome, positioning it for translation. The protein is Small ribosomal subunit protein uS3 of Nitratiruptor sp. (strain SB155-2).